The chain runs to 239 residues: MRIEVKLLPLKDNPILPFNYNYEVYSQILEKVNSIEPTIAKLLSSPHGFWTFSRIIVRKRKILPDKGIEILSDDVSLYISSSNEDIIRAIAEAVEKSPEFKIGELSFLVGDIKAIKVKELGKENVFSTLSPIVVRTVKFEGNKLRHWDLYPHDELFMDRLRKVMILRYSEVMGETPKDRDFTIEVLKFKPTRLMVGSSYIRGSLMVFRYAGSEEIARFGYENGFGEKTGLGFGMVKLIE.

The protein belongs to the CRISPR-associated protein Cas6/Cse3/CasE family. As to quaternary structure, monomer; homodimer when crystallized in the presence of crRNA. Varying the crRNA sequence varies degree of oligomerization and structure.

In terms of biological role, CRISPR (clustered regularly interspaced short palindromic repeat), is an adaptive immune system that provides protection against mobile genetic elements (viruses, transposable elements and conjugative plasmids). CRISPR clusters contain sequences complementary to antecedent mobile elements and target invading nucleic acids. CRISPR clusters are transcribed and processed into CRISPR RNA (crRNA), also called psiRNA (prokaryotic silencing) in this organism (Potential). This Pyrococcus horikoshii (strain ATCC 700860 / DSM 12428 / JCM 9974 / NBRC 100139 / OT-3) protein is Putative CRISPR-associated endoribonuclease-like protein Cas6nc (cas6nc).